We begin with the raw amino-acid sequence, 78 residues long: Acyl carrier protein (78 aa).

The region spanning 2 to 77 (SDIAERVKKI…DAIKFLEKNA (76 aa)) is the Carrier domain. An O-(pantetheine 4'-phosphoryl)serine modification is found at Ser37.

This sequence belongs to the acyl carrier protein (ACP) family. 4'-phosphopantetheine is transferred from CoA to a specific serine of apo-ACP by AcpS. This modification is essential for activity because fatty acids are bound in thioester linkage to the sulfhydryl of the prosthetic group.

It localises to the cytoplasm. It functions in the pathway lipid metabolism; fatty acid biosynthesis. Carrier of the growing fatty acid chain in fatty acid biosynthesis. This is Acyl carrier protein from Azorhizobium caulinodans (strain ATCC 43989 / DSM 5975 / JCM 20966 / LMG 6465 / NBRC 14845 / NCIMB 13405 / ORS 571).